The sequence spans 361 residues: Aminomethyltransferase (361 aa).

This sequence belongs to the GcvT family. The glycine cleavage system is composed of four proteins: P, T, L and H.

The catalysed reaction is N(6)-[(R)-S(8)-aminomethyldihydrolipoyl]-L-lysyl-[protein] + (6S)-5,6,7,8-tetrahydrofolate = N(6)-[(R)-dihydrolipoyl]-L-lysyl-[protein] + (6R)-5,10-methylene-5,6,7,8-tetrahydrofolate + NH4(+). In terms of biological role, the glycine cleavage system catalyzes the degradation of glycine. In Bacteroides thetaiotaomicron (strain ATCC 29148 / DSM 2079 / JCM 5827 / CCUG 10774 / NCTC 10582 / VPI-5482 / E50), this protein is Aminomethyltransferase.